The following is a 367-amino-acid chain: Secondary metabolism regulator laeA (367 aa).

Residues 1 to 82 (MFGQQQQQQP…PETYPGHEEN (82 aa)) are disordered. Polar residues predominate over residues 19–41 (LNHNSRWTPPNESAQPRRSSNAM). Basic and acidic residues-rich tracts occupy residues 47–56 (TDRDPAEGHP) and 71–82 (KSPETYPGHEEN).

This sequence belongs to the methyltransferase superfamily. LaeA methyltransferase family. As to quaternary structure, component of the heterotrimeric velvet complex composed of laeA, veA and velB; VeA acting as a bridging protein between laeA and velB.

The protein resides in the nucleus. The catalysed reaction is L-methionyl-[protein] + S-adenosyl-L-methionine = S-methyl-L-methionyl-[protein] + S-adenosyl-L-homocysteine. Its function is as follows. Methyltransferase that performs automethylation. No other methyl-accepting substrate has been identified yet. Component of the velvet transcription factor complex that acts as a global regulator for secondary metabolite gene expression. Controls the expression of the monacolin K gene clusters. Also regulates pigmentation. This is Secondary metabolism regulator laeA from Monascus pilosus (Red mold).